Reading from the N-terminus, the 466-residue chain is Adenosylhomocysteinase (466 aa).

Substrate-binding residues include threonine 57, aspartate 132, and glutamate 192. Position 193–195 (193–195 (TTT)) interacts with NAD(+). Substrate is bound by residues lysine 222 and aspartate 226. Residues asparagine 227, 256 to 261 (GYGDVG), glutamate 279, asparagine 314, 335 to 337 (IGH), and asparagine 380 contribute to the NAD(+) site.

It belongs to the adenosylhomocysteinase family. The cofactor is NAD(+).

It localises to the cytoplasm. It catalyses the reaction S-adenosyl-L-homocysteine + H2O = L-homocysteine + adenosine. Its pathway is amino-acid biosynthesis; L-homocysteine biosynthesis; L-homocysteine from S-adenosyl-L-homocysteine: step 1/1. Functionally, may play a key role in the regulation of the intracellular concentration of adenosylhomocysteine. This Rhizobium etli (strain ATCC 51251 / DSM 11541 / JCM 21823 / NBRC 15573 / CFN 42) protein is Adenosylhomocysteinase.